Reading from the N-terminus, the 308-residue chain is SAP30-binding protein (308 aa).

The interval 15–101 (AEYSDPESDG…EAEKRDPQEL (87 aa)) is disordered. Phosphoserine is present on residues Ser-18, Ser-22, Ser-43, and Ser-52. Residues 57-78 (DEDGYEEEEDENSKQSEDDDSE) show a composition bias toward acidic residues. Residues 79–99 (TEKPEADDPKDNTEAEKRDPQ) are compositionally biased toward basic and acidic residues. Residue Lys-95 forms a Glycyl lysine isopeptide (Lys-Gly) (interchain with G-Cter in SUMO2) linkage. Position 113 is a phosphoserine (Ser-113). Residues Lys-220, Lys-304, and Lys-305 each participate in a glycyl lysine isopeptide (Lys-Gly) (interchain with G-Cter in SUMO2) cross-link.

Belongs to the HCNGP family. In terms of assembly, interacts with histone deacetylase complex subunit SAP30.

Its subcellular location is the nucleus. In terms of biological role, plays a role in transcriptional repression by promoting histone deacetylase activity, leading to deacetylation of histone H3. May be involved in the regulation of beta-2-microglobulin genes. The sequence is that of SAP30-binding protein (Sap30bp) from Mus musculus (Mouse).